Reading from the N-terminus, the 116-residue chain is Fluoride-specific ion channel FluC 2 (116 aa).

Transmembrane regions (helical) follow at residues 3–23 (LLTA…RYAV) and 43–63 (LLFG…AVTV). Residues Gly-67 and Thr-70 each coordinate Na(+). A helical transmembrane segment spans residues 96–116 (VGTLAAALLAVFLGIALGAAL).

The protein belongs to the fluoride channel Fluc/FEX (TC 1.A.43) family.

The protein localises to the cell membrane. It catalyses the reaction fluoride(in) = fluoride(out). Its activity is regulated as follows. Na(+) is not transported, but it plays an essential structural role and its presence is essential for fluoride channel function. In terms of biological role, fluoride-specific ion channel. Important for reducing fluoride concentration in the cell, thus reducing its toxicity. This is Fluoride-specific ion channel FluC 2 from Natronomonas pharaonis (strain ATCC 35678 / DSM 2160 / CIP 103997 / JCM 8858 / NBRC 14720 / NCIMB 2260 / Gabara) (Halobacterium pharaonis).